The following is a 466-amino-acid chain: Paraneoplastic antigen Ma3 homolog (466 aa).

The interval 379 to 408 (RPYQGSRRRRHRRRGQHRKGGVPRDDSQGT) is disordered. Positions 384 to 399 (SRRRRHRRRGQHRKGG) are enriched in basic residues. The CCHC-type zinc finger occupies 415-432 (TFCYSCGEDGHIRVHCFN). Residues 441 to 466 (QKRQAAMEKGNRSWAWEKSHPKPKTK) form a disordered region. Residues 445-460 (AAMEKGNRSWAWEKSH) are compositionally biased toward basic and acidic residues.

The protein belongs to the PNMA family. In terms of tissue distribution, expressed in the cerebrum and cerebellum.

It is found in the nucleus. The protein resides in the nucleolus. In Mus musculus (Mouse), this protein is Paraneoplastic antigen Ma3 homolog (Pnma3).